Consider the following 327-residue polypeptide: Methionyl-tRNA formyltransferase (327 aa).

Position 121–124 (121–124 (SLLP)) interacts with (6S)-5,6,7,8-tetrahydrofolate.

It belongs to the Fmt family.

It carries out the reaction L-methionyl-tRNA(fMet) + (6R)-10-formyltetrahydrofolate = N-formyl-L-methionyl-tRNA(fMet) + (6S)-5,6,7,8-tetrahydrofolate + H(+). Functionally, attaches a formyl group to the free amino group of methionyl-tRNA(fMet). The formyl group appears to play a dual role in the initiator identity of N-formylmethionyl-tRNA by promoting its recognition by IF2 and preventing the misappropriation of this tRNA by the elongation apparatus. This chain is Methionyl-tRNA formyltransferase, found in Paraburkholderia phymatum (strain DSM 17167 / CIP 108236 / LMG 21445 / STM815) (Burkholderia phymatum).